An 83-amino-acid polypeptide reads, in one-letter code: Mu-theraphotoxin-Hhn2n (83 aa).

An N-terminal signal peptide occupies residues 1–21; it reads MKASMYLALAGLVLLFVVGYA. A propeptide spanning residues 22–48 is cleaved from the precursor; the sequence is SESEEKEFPRELLSKIFAVDDFKGEER. Intrachain disulfides connect C50-C65, C57-C70, and C64-C77. L81 is subject to Leucine amide.

Belongs to the neurotoxin 10 (Hwtx-1) family. 15 (Hntx-3) subfamily. Monomer. In terms of tissue distribution, expressed by the venom gland.

The protein resides in the secreted. In terms of biological role, lethal neurotoxin. Selectively blocks tetrodotoxin-sensitive voltage-gated sodium channels (Nav). Does not affect tetrodotoxin-resistant voltage-gated sodium channels or calcium channels. The protein is Mu-theraphotoxin-Hhn2n of Cyriopagopus hainanus (Chinese bird spider).